The sequence spans 700 residues: ATP-dependent zinc metalloprotease FtsH (700 aa).

The Cytoplasmic segment spans residues 1–10 (MNNNKGGFLR). A helical membrane pass occupies residues 11–31 (SSVFYIFIFLAVVGMVYGLFG). Over 32–130 (NDKTTTKTIT…LVTKQAENSG (99 aa)) the chain is Extracellular. The chain crosses the membrane as a helical span at residues 131–151 (FWLNLLVSLVPVLLIVAVFYL). Residues 152 to 700 (MMNQAGGGKG…ETDDNNTENK (549 aa)) are Cytoplasmic-facing. 227–234 (GPPGTGKT) is a binding site for ATP. Position 449 (histidine 449) interacts with Zn(2+). Residue glutamate 450 is part of the active site. Zn(2+) is bound by residues histidine 453 and aspartate 525. The segment at 644–700 (KSFEEAKAAADAKDSQAEQRFEKQDEEKSSDDHSESKNEDTDSTDKSETDDNNTENK) is disordered.

In the central section; belongs to the AAA ATPase family. The protein in the C-terminal section; belongs to the peptidase M41 family. In terms of assembly, homohexamer. Zn(2+) serves as cofactor.

It localises to the cell membrane. In terms of biological role, acts as a processive, ATP-dependent zinc metallopeptidase for both cytoplasmic and membrane proteins. Plays a role in the quality control of integral membrane proteins. This chain is ATP-dependent zinc metalloprotease FtsH, found in Leuconostoc mesenteroides subsp. mesenteroides (strain ATCC 8293 / DSM 20343 / BCRC 11652 / CCM 1803 / JCM 6124 / NCDO 523 / NBRC 100496 / NCIMB 8023 / NCTC 12954 / NRRL B-1118 / 37Y).